Consider the following 414-residue polypeptide: Gamma-glutamyl phosphate reductase (414 aa).

It belongs to the gamma-glutamyl phosphate reductase family.

The protein resides in the cytoplasm. It carries out the reaction L-glutamate 5-semialdehyde + phosphate + NADP(+) = L-glutamyl 5-phosphate + NADPH + H(+). Its pathway is amino-acid biosynthesis; L-proline biosynthesis; L-glutamate 5-semialdehyde from L-glutamate: step 2/2. Functionally, catalyzes the NADPH-dependent reduction of L-glutamate 5-phosphate into L-glutamate 5-semialdehyde and phosphate. The product spontaneously undergoes cyclization to form 1-pyrroline-5-carboxylate. This is Gamma-glutamyl phosphate reductase from Xanthomonas oryzae pv. oryzae (strain KACC10331 / KXO85).